The chain runs to 448 residues: Damage-control phosphatase ARMT1 (448 aa).

Positions 257 and 258 each coordinate Mn(2+). 257 to 258 contacts substrate; that stretch reads DN. Residues E262 and D295 each contribute to the S-adenosyl-L-methionine site. D295 serves as a coordination point for Mn(2+). Residues 371 to 375 and K408 each bind substrate; that span reads DLNYR. The short motif at 405–408 is the Subfamily III RTxK motif element; the sequence is RTLK.

Belongs to the damage-control phosphatase family. Sugar phosphate phosphatase III subfamily. Requires Mn(2+) as cofactor. Ni(2+) is required as a cofactor. Automethylated.

It carries out the reaction beta-D-fructose 1-phosphate + H2O = D-fructose + phosphate. The catalysed reaction is beta-D-fructose 6-phosphate = dihydroxyacetone + D-glyceraldehyde 3-phosphate. The enzyme catalyses L-glutamyl-[protein] + S-adenosyl-L-methionine = [protein]-L-glutamate 5-O-methyl ester + S-adenosyl-L-homocysteine. Metal-dependent phosphatase that shows phosphatase activity against several substrates, including fructose-1-phosphate and fructose-6-phosphate. Its preference for fructose-1-phosphate, a strong glycating agent that causes DNA damage rather than a canonical yeast metabolite, suggests a damage-control function in hexose phosphate metabolism. Has also been shown to have O-methyltransferase activity that methylates glutamate residues of target proteins to form gamma-glutamyl methyl ester residues. Possibly methylates PCNA, suggesting it is involved in the DNA damage response. The protein is Damage-control phosphatase ARMT1 of Danio rerio (Zebrafish).